The primary structure comprises 123 residues: Snaclec echicetin subunit beta (123 aa).

Positions N1–C121 constitute a C-type lectin domain. 3 disulfides stabilise this stretch: C2–C13, C30–C119, and C96–C111.

This sequence belongs to the snaclec family. Heterodimer of subunits alpha and beta; disulfide-linked. Forms an active complex with the pentameric immunoglobuline Mkappa (IgMkappa). Expressed by the venom gland.

Its subcellular location is the secreted. Functionally, echicetin itself inhibits aggregation of washed platelets induced by vWF, thrombin or alboaggregin-A. However, when complexed with the pentameric plasma immunoglobulin Mkappa (IgMkappa), echicetin binds specifically to GPIb and activates platelets. This is caused by P-selectin expression and activation of alpha-IIb/beta-3 as well as tyrosine phosphorylation of several signal transduction molecules, including p53/56(LYN), p64, p72(SYK), p70 to p90, and p120. In vivo, it induces thrombocytopenia when injected into mice, probably accounting of activation of platelets rather than inhibition. The chain is Snaclec echicetin subunit beta from Echis carinatus sochureki (Saw-scaled viper).